Here is a 147-residue protein sequence, read N- to C-terminus: Transcription elongation factor Spt5 (147 aa).

In terms of domain architecture, KOW spans 91 to 122 (KGDVVEIIAGPFKGERAKVIRVDKHKEEVTLE).

Belongs to the archaeal Spt5 family. Heterodimer composed of Spt4 and Spt5. Interacts with RNA polymerase (RNAP). Forms a homodimer in solution.

In terms of biological role, stimulates transcription elongation. The sequence is that of Transcription elongation factor Spt5 from Methanocaldococcus jannaschii (strain ATCC 43067 / DSM 2661 / JAL-1 / JCM 10045 / NBRC 100440) (Methanococcus jannaschii).